Reading from the N-terminus, the 369-residue chain is tRNA(Met) cytidine acetate ligase (369 aa).

ATP-binding positions include 7–20 (VAEF…HKYL), G96, N152, and R175.

This sequence belongs to the TmcAL family.

The protein resides in the cytoplasm. It catalyses the reaction cytidine(34) in elongator tRNA(Met) + acetate + ATP = N(4)-acetylcytidine(34) in elongator tRNA(Met) + AMP + diphosphate. Functionally, catalyzes the formation of N(4)-acetylcytidine (ac(4)C) at the wobble position of elongator tRNA(Met), using acetate and ATP as substrates. First activates an acetate ion to form acetyladenylate (Ac-AMP) and then transfers the acetyl group to tRNA to form ac(4)C34. The chain is tRNA(Met) cytidine acetate ligase from Streptococcus agalactiae serotype Ia (strain ATCC 27591 / A909 / CDC SS700).